A 687-amino-acid chain; its full sequence is Probable ATP-dependent RNA helicase Dbp73D (687 aa).

Disordered regions lie at residues 1–26 and 52–87; these read MELF…TNNE and TPIL…EEDV. Composition is skewed to basic and acidic residues over residues 9 to 18 and 54 to 79; these read YTEDLKEQKD and ILEK…EKPL. The Q motif motif lies at 160–168; that stretch reads LFPVQKQVI. Residues 177 to 381 enclose the Helicase ATP-binding domain; that stretch reads KPPPFRPRDI…DLRLFQPRLF (205 aa). 190-197 contributes to the ATP binding site; it reads APTGSGKT. The short motif at 305-308 is the DEAD box element; it reads DEAD. The 150-residue stretch at 434-583 folds into the Helicase C-terminal domain; sequence TVFALVEKYK…EIHVSPDIEI (150 aa). The tract at residues 646–675 is disordered; the sequence is IVQSSKKSSETKNSKTKADKTKYQPKETKK. Residues 652-675 are compositionally biased toward basic and acidic residues; sequence KSSETKNSKTKADKTKYQPKETKK.

It belongs to the DEAD box helicase family. DDX51/DBP6 subfamily. As to expression, expressed in the germline tissue of the ovary.

Its subcellular location is the nucleus. The protein resides in the nucleolus. The catalysed reaction is ATP + H2O = ADP + phosphate + H(+). In terms of biological role, ATP-binding RNA helicase involved in the biogenesis of 60S ribosomal subunits. This Drosophila melanogaster (Fruit fly) protein is Probable ATP-dependent RNA helicase Dbp73D (Dbp73D).